Reading from the N-terminus, the 153-residue chain is 3-hydroxyacyl-[acyl-carrier-protein] dehydratase FabZ (153 aa).

The active site involves H58.

The protein belongs to the thioester dehydratase family. FabZ subfamily.

It localises to the cytoplasm. The enzyme catalyses a (3R)-hydroxyacyl-[ACP] = a (2E)-enoyl-[ACP] + H2O. In terms of biological role, involved in unsaturated fatty acids biosynthesis. Catalyzes the dehydration of short chain beta-hydroxyacyl-ACPs and long chain saturated and unsaturated beta-hydroxyacyl-ACPs. The chain is 3-hydroxyacyl-[acyl-carrier-protein] dehydratase FabZ from Bradyrhizobium diazoefficiens (strain JCM 10833 / BCRC 13528 / IAM 13628 / NBRC 14792 / USDA 110).